The sequence spans 216 residues: Golgi to ER traffic protein 1 (216 aa).

Over 1–9 (MFDISSSNL) the chain is Lumenal. Residues 10 to 29 (LISVLVVLFAKQLINAVGKA) form a helical membrane-spanning segment. Residues 30–116 (TLENIGWSAY…YISKYIGYMI (87 aa)) are Cytoplasmic-facing. Positions 54 to 105 (LDQKNVELAKVSKERKSISAQDQYARWTKLNRQFDKLTGEINKLKEETSASR) form a coiled coil. Residues 117–137 (LVTTTLPIWFFRVWFRKAVLF) traverse the membrane as a helical segment. Topologically, residues 138–161 (YFPTGVLPHYLEWFLALPFITTGG) are lumenal. A helical membrane pass occupies residues 162 to 178 (VGLTIWMSAVNNVVSSV). Over 179 to 216 (IFLVKFPFEKEVPFPSKEVGNEKTSINKEEVSGTPAAN) the chain is Cytoplasmic. The interval 193-216 (PSKEVGNEKTSINKEEVSGTPAAN) is disordered. Over residues 197–209 (VGNEKTSINKEEV) the composition is skewed to basic and acidic residues.

Belongs to the WRB/GET1 family. In terms of assembly, component of the Golgi to ER traffic (GET) complex, which is composed of GET1, GET2 and GET3. Within the complex, GET1 and GET2 form a heterotetramer which is stabilized by phosphatidylinositol binding and which binds to the GET3 homodimer.

It is found in the endoplasmic reticulum membrane. Its subcellular location is the golgi apparatus membrane. Required for the post-translational delivery of tail-anchored (TA) proteins to the endoplasmic reticulum. Together with GET2, acts as a membrane receptor for soluble GET3, which recognizes and selectively binds the transmembrane domain of TA proteins in the cytosol. The GET complex cooperates with the HDEL receptor ERD2 to mediate the ATP-dependent retrieval of resident ER proteins that contain a C-terminal H-D-E-L retention signal from the Golgi to the ER. The polypeptide is Golgi to ER traffic protein 1 (Debaryomyces hansenii (strain ATCC 36239 / CBS 767 / BCRC 21394 / JCM 1990 / NBRC 0083 / IGC 2968) (Yeast)).